The following is a 384-amino-acid chain: tRNA-specific 2-thiouridylase MnmA (384 aa).

Residues 9–16 (GMSGGVDS) and methionine 35 contribute to the ATP site. The interaction with target base in tRNA stretch occupies residues 95 to 97 (NPD). Cysteine 100 acts as the Nucleophile in catalysis. A disulfide bridge links cysteine 100 with cysteine 196. Glycine 124 lines the ATP pocket. An interaction with tRNA region spans residues 146 to 148 (KDQ). The active-site Cysteine persulfide intermediate is cysteine 196. The interval 308–309 (RY) is interaction with tRNA.

The protein belongs to the MnmA/TRMU family.

The protein localises to the cytoplasm. It catalyses the reaction S-sulfanyl-L-cysteinyl-[protein] + uridine(34) in tRNA + AH2 + ATP = 2-thiouridine(34) in tRNA + L-cysteinyl-[protein] + A + AMP + diphosphate + H(+). In terms of biological role, catalyzes the 2-thiolation of uridine at the wobble position (U34) of tRNA, leading to the formation of s(2)U34. This chain is tRNA-specific 2-thiouridylase MnmA, found in Burkholderia ambifaria (strain ATCC BAA-244 / DSM 16087 / CCUG 44356 / LMG 19182 / AMMD) (Burkholderia cepacia (strain AMMD)).